Here is a 465-residue protein sequence, read N- to C-terminus: Poly(A) polymerase I (465 aa).

Residues Asp-80, Asp-82, and Asp-162 contribute to the active site. The tract at residues 429–465 (SAPPDQKGMLNELDEEPSPRRRTRRPRKRAPRREGTA) is disordered. Over residues 448–459 (RRRTRRPRKRAP) the composition is skewed to basic residues.

This sequence belongs to the tRNA nucleotidyltransferase/poly(A) polymerase family.

It catalyses the reaction RNA(n) + ATP = RNA(n)-3'-adenine ribonucleotide + diphosphate. In terms of biological role, adds poly(A) tail to the 3' end of many RNAs, which usually targets these RNAs for decay. Plays a significant role in the global control of gene expression, through influencing the rate of transcript degradation, and in the general RNA quality control. This is Poly(A) polymerase I from Escherichia coli O157:H7.